A 948-amino-acid chain; its full sequence is UvrABC system protein A (948 aa).

33–40 serves as a coordination point for ATP; sequence GLSGSGKS. A C4-type zinc finger spans residues 252-279; it reads CPICGFSIGELEPRMFSFNSPFGACPTC. ABC transporter domains are found at residues 309–587 and 607–935; these read WIPT…KKSL and ASDR…KYLK. 639-646 contributes to the ATP binding site; it reads GVSGSGKS. Residues 738-764 form a C4-type zinc finger; the sequence is CEACKGDGIIKIEMHFLPDVYVPCEVC.

Belongs to the ABC transporter superfamily. UvrA family. Forms a heterotetramer with UvrB during the search for lesions.

The protein localises to the cytoplasm. In terms of biological role, the UvrABC repair system catalyzes the recognition and processing of DNA lesions. UvrA is an ATPase and a DNA-binding protein. A damage recognition complex composed of 2 UvrA and 2 UvrB subunits scans DNA for abnormalities. When the presence of a lesion has been verified by UvrB, the UvrA molecules dissociate. This chain is UvrABC system protein A, found in Staphylococcus aureus (strain MRSA252).